The following is a 405-amino-acid chain: NADH-quinone oxidoreductase subunit D (405 aa).

It belongs to the complex I 49 kDa subunit family. As to quaternary structure, NDH-1 is composed of 14 different subunits. Subunits NuoB, C, D, E, F, and G constitute the peripheral sector of the complex.

It localises to the cell inner membrane. The catalysed reaction is a quinone + NADH + 5 H(+)(in) = a quinol + NAD(+) + 4 H(+)(out). NDH-1 shuttles electrons from NADH, via FMN and iron-sulfur (Fe-S) centers, to quinones in the respiratory chain. The immediate electron acceptor for the enzyme in this species is believed to be ubiquinone. Couples the redox reaction to proton translocation (for every two electrons transferred, four hydrogen ions are translocated across the cytoplasmic membrane), and thus conserves the redox energy in a proton gradient. In Sphingopyxis alaskensis (strain DSM 13593 / LMG 18877 / RB2256) (Sphingomonas alaskensis), this protein is NADH-quinone oxidoreductase subunit D.